The chain runs to 133 residues: Ribosome-binding factor A (133 aa).

Belongs to the RbfA family. Monomer. Binds 30S ribosomal subunits, but not 50S ribosomal subunits or 70S ribosomes.

It is found in the cytoplasm. In terms of biological role, one of several proteins that assist in the late maturation steps of the functional core of the 30S ribosomal subunit. Associates with free 30S ribosomal subunits (but not with 30S subunits that are part of 70S ribosomes or polysomes). Required for efficient processing of 16S rRNA. May interact with the 5'-terminal helix region of 16S rRNA. This is Ribosome-binding factor A from Salmonella schwarzengrund (strain CVM19633).